Here is a 446-residue protein sequence, read N- to C-terminus: Peroxisomal biogenesis factor 3 (446 aa).

At 1–12 (MARTGLQRHRGK) the chain is on the peroxisomal side. A helical transmembrane segment spans residues 13–33 (LLGTGAVLGGLVVAGVVAAVA). Topologically, residues 34–446 (AKRWVRRQQQ…SASVYSNFGV (413 aa)) are cytoplasmic. The disordered stretch occupies residues 101 to 122 (RAGEDDEQGSGGHASAGEGSVS).

This sequence belongs to the peroxin-3 family.

It localises to the peroxisome membrane. Its function is as follows. Involved in peroxisome biosynthesis. In Eremothecium gossypii (strain ATCC 10895 / CBS 109.51 / FGSC 9923 / NRRL Y-1056) (Yeast), this protein is Peroxisomal biogenesis factor 3 (PEX3).